Here is a 411-residue protein sequence, read N- to C-terminus: Arginine deiminase (411 aa).

Cys-401 acts as the Amidino-cysteine intermediate in catalysis.

The protein belongs to the arginine deiminase family.

The protein resides in the cytoplasm. It carries out the reaction L-arginine + H2O = L-citrulline + NH4(+). It functions in the pathway amino-acid degradation; L-arginine degradation via ADI pathway; carbamoyl phosphate from L-arginine: step 1/2. This chain is Arginine deiminase, found in Streptococcus equi subsp. zooepidemicus (strain MGCS10565).